The primary structure comprises 271 residues: Cytosolic Fe-S cluster assembly factor NUBP2 (271 aa).

The residue at position 1 (M1) is an N-acetylmethionine. 22 to 29 (GKGGVGKS) is a binding site for ATP. C196 and C199 together coordinate [4Fe-4S] cluster.

The protein belongs to the Mrp/NBP35 ATP-binding proteins family. NUBP2/CFD1 subfamily. Heterotetramer of 2 NUBP1 and 2 NUBP2 chains. Interacts with KIFC1. Interacts with NUBP1. [4Fe-4S] cluster is required as a cofactor.

It localises to the nucleus. The protein resides in the cytoplasm. The protein localises to the cytoskeleton. It is found in the microtubule organizing center. Its subcellular location is the centrosome. It localises to the cilium axoneme. The protein resides in the centriole. Component of the cytosolic iron-sulfur (Fe/S) protein assembly (CIA) machinery. Required for maturation of extramitochondrial Fe-S proteins. The NUBP1-NUBP2 heterotetramer forms a Fe-S scaffold complex, mediating the de novo assembly of an Fe-S cluster and its transfer to target apoproteins. Negatively regulates cilium formation and structure. The polypeptide is Cytosolic Fe-S cluster assembly factor NUBP2 (Bos taurus (Bovine)).